The sequence spans 341 residues: Biotin synthase (341 aa).

Residues 53–272 (NHVETASLLS…IAVARIMMPK (220 aa)) form the Radical SAM core domain. Positions 68, 72, and 75 each coordinate [4Fe-4S] cluster. Cys112, Cys143, Cys203, and Arg276 together coordinate [2Fe-2S] cluster.

Belongs to the radical SAM superfamily. Biotin synthase family. In terms of assembly, homodimer. Requires [4Fe-4S] cluster as cofactor. [2Fe-2S] cluster serves as cofactor.

The enzyme catalyses (4R,5S)-dethiobiotin + (sulfur carrier)-SH + 2 reduced [2Fe-2S]-[ferredoxin] + 2 S-adenosyl-L-methionine = (sulfur carrier)-H + biotin + 2 5'-deoxyadenosine + 2 L-methionine + 2 oxidized [2Fe-2S]-[ferredoxin]. It participates in cofactor biosynthesis; biotin biosynthesis; biotin from 7,8-diaminononanoate: step 2/2. Functionally, catalyzes the conversion of dethiobiotin (DTB) to biotin by the insertion of a sulfur atom into dethiobiotin via a radical-based mechanism. This is Biotin synthase from Nitrobacter winogradskyi (strain ATCC 25391 / DSM 10237 / CIP 104748 / NCIMB 11846 / Nb-255).